A 325-amino-acid chain; its full sequence is tRNA(Ile)-lysidine synthase (325 aa).

Residue 34-39 (SGGADS) participates in ATP binding.

The protein belongs to the tRNA(Ile)-lysidine synthase family.

The protein localises to the cytoplasm. It carries out the reaction cytidine(34) in tRNA(Ile2) + L-lysine + ATP = lysidine(34) in tRNA(Ile2) + AMP + diphosphate + H(+). Ligates lysine onto the cytidine present at position 34 of the AUA codon-specific tRNA(Ile) that contains the anticodon CAU, in an ATP-dependent manner. Cytidine is converted to lysidine, thus changing the amino acid specificity of the tRNA from methionine to isoleucine. In Rhodococcus jostii (strain RHA1), this protein is tRNA(Ile)-lysidine synthase.